A 247-amino-acid chain; its full sequence is ATP synthase subunit a, chloroplastic (247 aa).

The next 5 membrane-spanning stretches (helical) occupy residues 38-58 (QVLITSWVVIAILLGSASIAV), 95-115 (VPFIGTMFLFIFVSNWSGALL), 134-154 (INTTVALALLTSVAYFYAGLS), 199-219 (LVVVVLVSLVPSVVPIPVMFL), and 220-240 (GLFTSGIQALIFATLAAAYIG).

Belongs to the ATPase A chain family. As to quaternary structure, F-type ATPases have 2 components, CF(1) - the catalytic core - and CF(0) - the membrane proton channel. CF(1) has five subunits: alpha(3), beta(3), gamma(1), delta(1), epsilon(1). CF(0) has four main subunits: a, b, b' and c.

The protein resides in the plastid. It localises to the chloroplast thylakoid membrane. Functionally, key component of the proton channel; it plays a direct role in the translocation of protons across the membrane. This chain is ATP synthase subunit a, chloroplastic, found in Oenothera argillicola (Appalachian evening primrose).